The chain runs to 109 residues: Large ribosomal subunit protein uL22 (109 aa).

The protein belongs to the universal ribosomal protein uL22 family. Part of the 50S ribosomal subunit.

Its function is as follows. This protein binds specifically to 23S rRNA; its binding is stimulated by other ribosomal proteins, e.g. L4, L17, and L20. It is important during the early stages of 50S assembly. It makes multiple contacts with different domains of the 23S rRNA in the assembled 50S subunit and ribosome. The globular domain of the protein is located near the polypeptide exit tunnel on the outside of the subunit, while an extended beta-hairpin is found that lines the wall of the exit tunnel in the center of the 70S ribosome. The polypeptide is Large ribosomal subunit protein uL22 (Paraburkholderia phymatum (strain DSM 17167 / CIP 108236 / LMG 21445 / STM815) (Burkholderia phymatum)).